The sequence spans 353 residues: Phosphate acyltransferase (353 aa).

The protein belongs to the PlsX family. In terms of assembly, homodimer. Probably interacts with PlsY.

Its subcellular location is the cytoplasm. The catalysed reaction is a fatty acyl-[ACP] + phosphate = an acyl phosphate + holo-[ACP]. The protein operates within lipid metabolism; phospholipid metabolism. Catalyzes the reversible formation of acyl-phosphate (acyl-PO(4)) from acyl-[acyl-carrier-protein] (acyl-ACP). This enzyme utilizes acyl-ACP as fatty acyl donor, but not acyl-CoA. The chain is Phosphate acyltransferase from Agrobacterium fabrum (strain C58 / ATCC 33970) (Agrobacterium tumefaciens (strain C58)).